The sequence spans 83 residues: Small ribosomal subunit protein bS16 (83 aa).

It belongs to the bacterial ribosomal protein bS16 family.

The chain is Small ribosomal subunit protein bS16 from Shewanella baltica (strain OS223).